The chain runs to 689 residues: Glycine--tRNA ligase beta subunit (689 aa).

It belongs to the class-II aminoacyl-tRNA synthetase family. As to quaternary structure, tetramer of two alpha and two beta subunits.

The protein resides in the cytoplasm. The enzyme catalyses tRNA(Gly) + glycine + ATP = glycyl-tRNA(Gly) + AMP + diphosphate. The protein is Glycine--tRNA ligase beta subunit of Actinobacillus succinogenes (strain ATCC 55618 / DSM 22257 / CCUG 43843 / 130Z).